Reading from the N-terminus, the 161-residue chain is Small ribosomal subunit protein uS9 (161 aa).

The disordered stretch occupies residues 1–38 (MAQTITSLADLKQGPGAEPAGLSAEPQEPKLDKEGRAY). Basic and acidic residues predominate over residues 27–38 (QEPKLDKEGRAY).

The protein belongs to the universal ribosomal protein uS9 family.

The sequence is that of Small ribosomal subunit protein uS9 from Rhodospirillum centenum (strain ATCC 51521 / SW).